A 137-amino-acid polypeptide reads, in one-letter code: Nucleoside diphosphate kinase (137 aa).

Lysine 9, phenylalanine 57, arginine 85, threonine 91, arginine 102, and asparagine 112 together coordinate ATP. The active-site Pros-phosphohistidine intermediate is histidine 115.

Belongs to the NDK family. Homotetramer. Mg(2+) is required as a cofactor.

The protein resides in the cytoplasm. The enzyme catalyses a 2'-deoxyribonucleoside 5'-diphosphate + ATP = a 2'-deoxyribonucleoside 5'-triphosphate + ADP. It carries out the reaction a ribonucleoside 5'-diphosphate + ATP = a ribonucleoside 5'-triphosphate + ADP. In terms of biological role, major role in the synthesis of nucleoside triphosphates other than ATP. The ATP gamma phosphate is transferred to the NDP beta phosphate via a ping-pong mechanism, using a phosphorylated active-site intermediate. This chain is Nucleoside diphosphate kinase, found in Leptospira borgpetersenii serovar Hardjo-bovis (strain L550).